We begin with the raw amino-acid sequence, 708 residues long: Elongation factor G 1 (708 aa).

The tr-type G domain maps to 9 to 295 (AKVRNIGIMA…AVVRYLPTPL (287 aa)). GTP contacts are provided by residues 18–25 (AHIDAGKT), 86–90 (DTPGH), and 140–143 (NKLD).

It belongs to the TRAFAC class translation factor GTPase superfamily. Classic translation factor GTPase family. EF-G/EF-2 subfamily.

It is found in the cytoplasm. In terms of biological role, catalyzes the GTP-dependent ribosomal translocation step during translation elongation. During this step, the ribosome changes from the pre-translocational (PRE) to the post-translocational (POST) state as the newly formed A-site-bound peptidyl-tRNA and P-site-bound deacylated tRNA move to the P and E sites, respectively. Catalyzes the coordinated movement of the two tRNA molecules, the mRNA and conformational changes in the ribosome. The polypeptide is Elongation factor G 1 (fusA) (Streptomyces coelicolor (strain ATCC BAA-471 / A3(2) / M145)).